A 146-amino-acid polypeptide reads, in one-letter code: MAGKEIQTPDQAEAFVAKVFDVLDSYDYTRFGEVLSTDLKYEGGLQKTSGLDNFINDIKASTQRMPGLQTSHSRYRTELTAEGTIYSEGHSNASLESNPGKVVTVPMIGVFKLDSEDGKIKEMRIYKDRLPFLALHQALPGMKANN.

Its pathway is antibiotic biosynthesis. Functionally, part of the gene cluster that mediates the biosynthesis of sordarin and hypoxysordarin, glycoside antibiotics with a unique tetracyclic diterpene aglycone structure. First, the geranylgeranyl diphosphate synthase sdnC constructs GGDP from farnesyl diphosphate and isopentenyl diphosphate. The diterpene cyclase sdnA then catalyzes the cyclization of GGDP to afford cycloaraneosene. Cycloaraneosene is then hydroxylated four times by the putative cytochrome P450 monooxygenases sdnB, sdnE, sdnF and sdnH to give a hydroxylated cycloaraneosene derivative such as cycloaraneosene-8,9,13,19-tetraol. Although the order of the hydroxylations is unclear, at least C8, C9 and C13 of the cycloaraneosene skeleton are hydroxylated before the sordaricin formation. Dehydration of the 13-hydroxy group of the hydroxylated cycloaraneosene derivative might be catalyzed by an unassigned hypothetical protein such as sdnG and sdnP to construct the cyclopentadiene moiety. The FAD-dependent oxidoreductase sdnN is proposed to catalyze the oxidation at C9 of the hydroxylated cycloaraneosene derivative and also catalyze the Baeyer-Villiger oxidation to give the lactone intermediate. The presumed lactone intermediate would be hydrolyzed to give an acrolein moiety and a carboxylate moiety. Then, [4+2]cycloaddition would occur between the acrolein moiety and the cyclopentadiene moiety to give sordaricin. SdnN might also be involved in the [4+2]cycloaddition after the hypothesized oxidation to accommodate the oxidized product and prompt the [4+2]cycloaddition. GDP-6-deoxy-D-altrose may be biosynthesized from GDP-D-mannose by the putative GDP-mannose-4,6-dehydratase sdnI and the short-chain dehydrogenase sdnK. The glycosyltransferase sdnJ catalyzes the attachment of 6-deoxy-D-altrose onto the 19-hydroxy group of sordaricin to give 4'-O-demethylsordarin. The methyltransferase sdnD would complete the biosynthesis of sordarin. Sordarin can be further modified into hypoxysordarin. The unique acyl chain at the 3'-hydroxy group of hypoxysordarin would be constructed by an iterative type I PKS sdnO and the trans-acting polyketide methyltransferase sdnL. SdnL would be responsible for the introduction of an alpha-methyl group of the polyketide chain. Alternatively, the beta-lactamase-like protein sdnR might be responsible for the cleavage and transfer of the polyketide chain from the PKS sdnO to sordarin. Two putative cytochrome P450 monooxygenases, sdnQ and sdnT, might catalyze the epoxidations of the polyketide chain to complete the biosynthesis of hypoxysordarin. Transcriptional regulators sdnM and sdnS are presumably encoded for the transcriptional regulation of the expression of the sdn gene cluster. The chain is Sordarin/hypoxysordarin biosynthesis cluster protein G from Sordaria araneosa (Pleurage araneosa).